Consider the following 335-residue polypeptide: Oligopeptide transport ATP-binding protein OppD (335 aa).

Positions 18–267 constitute an ABC transporter domain; that stretch reads LEVNDLRVTF…PVHPYSIGLL (250 aa). 54 to 61 serves as a coordination point for ATP; sequence GESGSGKS.

Belongs to the ABC transporter superfamily. The complex is composed of two ATP-binding proteins (OppD and OppF), two transmembrane proteins (OppB and OppC) and a solute-binding protein (OppA).

The protein localises to the cell inner membrane. It catalyses the reaction a [peptide](out) + ATP + H2O = a [peptide](in) + ADP + phosphate + H(+). It carries out the reaction L-alanyl-gamma-D-glutamyl-meso-2,6-diaminopimelate(out) + ATP + H2O = L-alanyl-gamma-D-glutamyl-meso-2,6-diaminopimelate(in) + ADP + phosphate + H(+). Its function is as follows. Part of the ABC transporter complex OppABCDF involved in the uptake of oligopeptides, including the cell wall murein tripeptide L-alanyl-gamma-D-glutamyl-meso-diaminopimelate. Responsible for energy coupling to the transport system. Plays an important nutritional role and is involved in the recycling of cell wall peptides. Binds ATP. The polypeptide is Oligopeptide transport ATP-binding protein OppD (Salmonella typhimurium (strain LT2 / SGSC1412 / ATCC 700720)).